The primary structure comprises 253 residues: tRNA 2'-phosphotransferase 1 (253 aa).

N-acetylmethionine is present on Met1. Disordered regions lie at residues 1–29 (MNFS…DRDV) and 225–253 (KPLS…RIQQ). Ser240 is subject to Phosphoserine. Basic residues predominate over residues 243–253 (HSSRERRRIQQ).

The protein belongs to the KptA/TPT1 family. As to expression, widely expressed. Weakly or not expressed in lung, spleen, small intestine and peripheral blood leukocytes.

It carries out the reaction 2'-phospho-[ligated tRNA] + NAD(+) = mature tRNA + ADP-alpha-D-ribose 1'',2''-cyclic phosphate + nicotinamide. Catalyzes the last step of tRNA splicing, the transfer of the splice junction 2'-phosphate from ligated tRNA to NAD to produce ADP-ribose 1''-2'' cyclic phosphate. The chain is tRNA 2'-phosphotransferase 1 (TRPT1) from Homo sapiens (Human).